Here is a 204-residue protein sequence, read N- to C-terminus: Recombination protein RecR (204 aa).

Residues 61-76 (CACCNTFSETQVCSTC) form a C4-type zinc finger. Residues 84 to 183 (SLLCIVETPA…KVTRIARGIP (100 aa)) form the Toprim domain.

It belongs to the RecR family.

Its function is as follows. May play a role in DNA repair. It seems to be involved in an RecBC-independent recombinational process of DNA repair. It may act with RecF and RecO. The sequence is that of Recombination protein RecR from Polynucleobacter necessarius subsp. necessarius (strain STIR1).